The sequence spans 493 residues: UDP-N-acetylmuramoyl-L-alanyl-D-glutamate--2,6-diaminopimelate ligase (493 aa).

UDP-N-acetyl-alpha-D-muramoyl-L-alanyl-D-glutamate-binding residues include leucine 30 and serine 32. 117-123 (GTNGKTT) contacts ATP. Residues asparagine 158, 159-160 (TT), serine 186, glutamine 192, and arginine 194 each bind UDP-N-acetyl-alpha-D-muramoyl-L-alanyl-D-glutamate. N6-carboxylysine is present on lysine 226. Residues arginine 388, 412–415 (DNPR), glycine 463, and glutamate 467 contribute to the meso-2,6-diaminopimelate site. A Meso-diaminopimelate recognition motif motif is present at residues 412–415 (DNPR).

This sequence belongs to the MurCDEF family. MurE subfamily. Mg(2+) is required as a cofactor. Carboxylation is probably crucial for Mg(2+) binding and, consequently, for the gamma-phosphate positioning of ATP.

The protein localises to the cytoplasm. It carries out the reaction UDP-N-acetyl-alpha-D-muramoyl-L-alanyl-D-glutamate + meso-2,6-diaminopimelate + ATP = UDP-N-acetyl-alpha-D-muramoyl-L-alanyl-gamma-D-glutamyl-meso-2,6-diaminopimelate + ADP + phosphate + H(+). It functions in the pathway cell wall biogenesis; peptidoglycan biosynthesis. Its function is as follows. Catalyzes the addition of meso-diaminopimelic acid to the nucleotide precursor UDP-N-acetylmuramoyl-L-alanyl-D-glutamate (UMAG) in the biosynthesis of bacterial cell-wall peptidoglycan. The sequence is that of UDP-N-acetylmuramoyl-L-alanyl-D-glutamate--2,6-diaminopimelate ligase from Vibrio vulnificus (strain YJ016).